Consider the following 197-residue polypeptide: Nucleoid occlusion factor SlmA (197 aa).

Positions 7-67 constitute an HTH tetR-type domain; that stretch reads INRREHILQC…GLIEFIEESL (61 aa). A DNA-binding region (H-T-H motif) is located at residues 30–49; that stretch reads TTAKLASEVGVSEAALYRHF. The stretch at 109 to 136 forms a coiled coil; it reads DALLGENERLRSRISNLFAKIETQLKQI.

It belongs to the nucleoid occlusion factor SlmA family. In terms of assembly, homodimer. Interacts with FtsZ.

It is found in the cytoplasm. The protein localises to the nucleoid. In terms of biological role, required for nucleoid occlusion (NO) phenomenon, which prevents Z-ring formation and cell division over the nucleoid. Acts as a DNA-associated cell division inhibitor that binds simultaneously chromosomal DNA and FtsZ, and disrupts the assembly of FtsZ polymers. SlmA-DNA-binding sequences (SBS) are dispersed on non-Ter regions of the chromosome, preventing FtsZ polymerization at these regions. The protein is Nucleoid occlusion factor SlmA of Shewanella baltica (strain OS223).